The following is a 502-amino-acid chain: CBL-interacting protein kinase 11 (502 aa).

In terms of domain architecture, Protein kinase spans 12–267 (YEVGKQLGQG…IPRIKRSTWY (256 aa)). ATP-binding positions include 18–26 (LGQGTFAKV) and lysine 41. Aspartate 135 (proton acceptor) is an active-site residue. The activation loop stretch occupies residues 153 to 182 (DFGLSALAESKRQDGLLHTTCGTPAYVAPE). Residues 297-333 (AECSTSEENQGSLSLPNLNAFDIISLSTGFNLSGFFE) enclose the NAF domain. A PPI region spans residues 339-367 (QEERFTTRQPVTTVLGKLKELAKRLKLKV). The tract at residues 447–502 (LQGEQQQSPLPPELPQDQLQPSLPQQEKQDMPEPPLLPQVPQEEVQTSIPAEQTKN) is disordered. Residues 461 to 472 (PQDQLQPSLPQQ) are compositionally biased toward low complexity. Residues 493 to 502 (TSIPAEQTKN) are compositionally biased toward polar residues.

It belongs to the protein kinase superfamily. CAMK Ser/Thr protein kinase family. SNF1 subfamily. Requires Mn(2+) as cofactor.

The catalysed reaction is L-seryl-[protein] + ATP = O-phospho-L-seryl-[protein] + ADP + H(+). It carries out the reaction L-threonyl-[protein] + ATP = O-phospho-L-threonyl-[protein] + ADP + H(+). CIPK serine-threonine protein kinases interact with CBL proteins. Binding of a CBL protein to the regulatory NAF domain of CIPK protein lead to the activation of the kinase in a calcium-dependent manner. The protein is CBL-interacting protein kinase 11 (CIPK11) of Oryza sativa subsp. japonica (Rice).